The following is a 272-amino-acid chain: NAD kinase (272 aa).

Catalysis depends on Asp50, which acts as the Proton acceptor. NAD(+) is bound by residues 50-51 (DG), 126-127 (NE), Arg152, Asp154, 165-170 (TAYNKS), and Ala189.

Belongs to the NAD kinase family. The cofactor is a divalent metal cation.

The protein resides in the cytoplasm. The enzyme catalyses NAD(+) + ATP = ADP + NADP(+) + H(+). Its function is as follows. Involved in the regulation of the intracellular balance of NAD and NADP, and is a key enzyme in the biosynthesis of NADP. Catalyzes specifically the phosphorylation on 2'-hydroxyl of the adenosine moiety of NAD to yield NADP. This Streptococcus pneumoniae (strain 70585) protein is NAD kinase.